A 209-amino-acid chain; its full sequence is NADH-quinone oxidoreductase subunit C (209 aa).

The protein belongs to the complex I 30 kDa subunit family. NDH-1 is composed of 14 different subunits. Subunits NuoB, C, D, E, F, and G constitute the peripheral sector of the complex.

It localises to the cell inner membrane. It catalyses the reaction a quinone + NADH + 5 H(+)(in) = a quinol + NAD(+) + 4 H(+)(out). In terms of biological role, NDH-1 shuttles electrons from NADH, via FMN and iron-sulfur (Fe-S) centers, to quinones in the respiratory chain. The immediate electron acceptor for the enzyme in this species is believed to be ubiquinone. Couples the redox reaction to proton translocation (for every two electrons transferred, four hydrogen ions are translocated across the cytoplasmic membrane), and thus conserves the redox energy in a proton gradient. The chain is NADH-quinone oxidoreductase subunit C from Bordetella petrii (strain ATCC BAA-461 / DSM 12804 / CCUG 43448).